A 412-amino-acid chain; its full sequence is Transcription factor NIGT1 (412 aa).

3 disordered regions span residues 54-241 (MDAA…RCWA), 286-310 (KYRL…PAPP), and 358-412 (AMLP…TTSA). Over residues 90 to 112 (ESTHADAAKSGKKEEAETSERHS) the composition is skewed to basic and acidic residues. Residues 183–193 (ASSTTAAASST) are compositionally biased toward low complexity. Residues 198 to 228 (SGDKPTDDDTEKHMETDKDNDKDAKDKDKEG) show a composition bias toward basic and acidic residues. Residues 232-292 (PHRKPRRCWA…HLQKYRLHTR (61 aa)) form the HTH myb-type domain. Residues 263–288 (PKQIRELMKVDGLTNDEVKSHLQKYR) constitute a DNA-binding region (H-T-H motif). Over residues 383 to 392 (SGSEGRRSGD) the composition is skewed to basic and acidic residues. Over residues 395 to 412 (DGSSSSPAVSSSSQTTSA) the composition is skewed to low complexity.

The protein resides in the nucleus. Functionally, transcriptional repressor that may play a role in response to nitrogen. May be involved in a time-dependent signaling for transcriptional regulation of nitrate-responsive genes. Binds specifically to the DNA sequence motif 5'-GAATC-3' or 5'-GAATATTC-3'. Represses the activity of its own promoter trough binding to these motifs. The chain is Transcription factor NIGT1 from Oryza sativa subsp. japonica (Rice).